A 178-amino-acid polypeptide reads, in one-letter code: Major non-capsid protein (178 aa).

This sequence belongs to the tenuiviruses NCP family.

The protein localises to the host cytoplasm. In terms of biological role, induces the formation of large intracellular inclusion body, organized in amorphous and crystalline arrays. Presumably the main cause of the stripe disease observed in host. In Rice stripe virus (isolate T) (RSV), this protein is Major non-capsid protein.